Reading from the N-terminus, the 244-residue chain is PHD finger protein ALFIN-LIKE 2 (244 aa).

Residues 137–148 (LSDRKHGRDNKS) are compositionally biased toward basic and acidic residues. Residues 137 to 178 (LSDRKHGRDNKSGADNGSKSRHSGKRANDVQTKTSRPAVVDD) form a disordered region. The PHD-type zinc finger occupies 187-239 (ETLCGTCGGRYNANEFWIGCDICERWFHGKCVRITPAKAEHIKHYKCPDCSSS).

The protein belongs to the Alfin family. In terms of assembly, interacts with H3K4me3 and to a lesser extent with H3K4me2.

The protein localises to the nucleus. Histone-binding component that specifically recognizes H3 tails trimethylated on 'Lys-4' (H3K4me3), which mark transcription start sites of virtually all active genes. The chain is PHD finger protein ALFIN-LIKE 2 from Oryza sativa subsp. indica (Rice).